The chain runs to 329 residues: Calcium homeostasis modulator protein (329 aa).

The Cytoplasmic segment spans residues 1–14; that stretch reads MTTSINSVVTVFQN. The helical transmembrane segment at 15-35 threads the bilayer; it reads VFTNHGSTLLNGILIATTVGG. Residues 36-53 are Extracellular-facing; sequence QSLVRKLTFSCPCAYPLN. Residues 54–74 traverse the membrane as a helical segment; the sequence is IYHSLVFMFGPTAALLLIGIT. The Cytoplasmic portion of the chain corresponds to 75-103; it reads VNSTTWKLAHGFFFRVRDTRHSWKTTCVS. Residues 104–124 traverse the membrane as a helical segment; that stretch reads WIEVLIQSSVAPIAWLFVVFL. The Extracellular portion of the chain corresponds to 125 to 191; the sequence is DGGYYRCYRS…DASYLEAESQ (67 aa). N-linked (GlcNAc...) asparagine glycosylation is present at Asn148. A helical transmembrane segment spans residues 192 to 212; the sequence is IYAWGLLLFSGVAAFLVITCN. The Cytoplasmic segment spans residues 213–329; the sequence is RMCDKYTLVQ…QIIVDETKED (117 aa).

Belongs to the CALHM family. Expressed in head and body wall muscles, IL2, ASG, ASI, ASJ, PHA and PHB sensory neurons, and spermatheca.

The protein localises to the cell membrane. Pore-forming subunit of a voltage-gated ion channel. Permeable to monovalent cations, divalent cations and anions with selectivity Ca(2+) &gt; Mg(2+) &gt; Na(+) = K(+) &gt; Cl(-). Acts both as a voltage-gated and calcium-activated ion channel. Required for normal locomotion. This is Calcium homeostasis modulator protein from Caenorhabditis elegans.